A 100-amino-acid polypeptide reads, in one-letter code: UPF0251 protein VV2_0946 (100 aa).

The protein belongs to the UPF0251 family.

The polypeptide is UPF0251 protein VV2_0946 (Vibrio vulnificus (strain CMCP6)).